The sequence spans 452 residues: UDP-N-acetylmuramoylalanine--D-glutamate ligase (452 aa).

Position 119–125 (119–125) interacts with ATP; sequence GSNGKTT.

This sequence belongs to the MurCDEF family.

The protein resides in the cytoplasm. It catalyses the reaction UDP-N-acetyl-alpha-D-muramoyl-L-alanine + D-glutamate + ATP = UDP-N-acetyl-alpha-D-muramoyl-L-alanyl-D-glutamate + ADP + phosphate + H(+). It functions in the pathway cell wall biogenesis; peptidoglycan biosynthesis. Its function is as follows. Cell wall formation. Catalyzes the addition of glutamate to the nucleotide precursor UDP-N-acetylmuramoyl-L-alanine (UMA). The polypeptide is UDP-N-acetylmuramoylalanine--D-glutamate ligase (murD) (Streptococcus pyogenes serotype M1).